We begin with the raw amino-acid sequence, 147 residues long: Large ribosomal subunit protein uL15 (147 aa).

A compositionally biased stretch (basic and acidic residues) spans 1-13; it reads MELHSLKAAEGSR. The segment at 1-57 is disordered; it reads MELHSLKAAEGSRKVRNRVGRGTSSGNGKTSGRGQKGQKSRSGGGVRPGFEGGQTEL. 2 stretches are compositionally biased toward gly residues: residues 23 to 35 and 42 to 52; these read TSSGNGKTSGRGQ and SGGGVRPGFEG.

The protein belongs to the universal ribosomal protein uL15 family. As to quaternary structure, part of the 50S ribosomal subunit.

Binds to the 23S rRNA. The polypeptide is Large ribosomal subunit protein uL15 (Lactococcus lactis subsp. cremoris (strain MG1363)).